The sequence spans 459 residues: FAD-dependent monooxygenase nanF (459 aa).

FAD is bound by residues E49, G62, and R121. Residues R200 and Y230 contribute to the active site. 2 residues coordinate FAD: D327 and G340.

The protein belongs to the paxM FAD-dependent monooxygenase family. FAD is required as a cofactor.

The protein operates within secondary metabolite biosynthesis. Functionally, FAD-dependent monooxygenase; part of the gene cluster that mediates the biosynthesis of the benzazepine alkaloid nanangelenin A which contains an unprecedented 3,4-dihydro-1-benzazepine-2,5-dione-N-prenyl-N-acetoxy-anthranilamide scaffold. The first step of nanangelenin biosynthesis is catalyzed by the indoleamine 2,3-dioxygenase nanC which produces N-formyl-kynurenine through the catabolism of tryptophan. The two-module NRPS nanA then utilizes anthranilate (Ant) and L-kynurenine (L-Kyn) to assemble the dipeptide product nanangelenin B. The first adenylation domain of nanA (A1) loads anthranilate onto the T1 domain, while A2 loads kynurenine, generated through spontaneous nonenzymatic deformylation of the nanC-supplied N-formyl-kynurenine. The peptide bond formation between the tethered amino acids is catalyzed by the first condensation domain (C1) between anthranilate's carbonyl carbon and kynurenine's aliphatic primary amine. The second C domain (C2) catalyzes the final cyclization event between the aromatic amine of kynurenine and the tethered carbonyl carbon, yielding nanangelenin B. The terminal T3 domain enhances the catalytic efficiency of C2, suggesting the T2-tethered Ant-L-Kyn is transferred to T3 prior to cyclization by C2. Once released from nanA, nanangelenin B is then prenylated by the prenyltransferase nanD to form nanangelenin C. Nanangelenin C is then N-hydroxylated by the FAD-dependent monooxygenase nanF and further acetylated by the acetyltransferase nanB to yield nanangelenin F. Finally, the N-methyltransferase nanE methylates the amide nitrogen of 1-benzazepine to convert nanangelenin F into nanangelenin A. NanE is also able to methylate most of the intermediates of the pathway such as nanangelenin B and nanangelenin C to produce nanangelenin D and nanangelenin E, respectively. The protein is FAD-dependent monooxygenase nanF of Aspergillus nanangensis.